The following is a 312-amino-acid chain: Olfactory receptor 4F3/4F16/4F29 (312 aa).

Topologically, residues Met-1–Leu-25 are extracellular. The N-linked (GlcNAc...) asparagine glycan is linked to Asn-5. The helical transmembrane segment at Leu-26–Val-49 threads the bilayer. At Thr-50–Ser-57 the chain is on the cytoplasmic side. The chain crosses the membrane as a helical span at residues Pro-58 to Pro-79. Topologically, residues Lys-80–Gln-100 are extracellular. Cysteines 97 and 189 form a disulfide. Residues Ile-101–Phe-120 traverse the membrane as a helical segment. Over Asp-121 to Arg-139 the chain is Cytoplasmic. The helical transmembrane segment at Met-140–Phe-158 threads the bilayer. Residues Gln-159–Leu-195 are Extracellular-facing. A helical transmembrane segment spans residues Gln-196–Val-219. Residues Phe-220–Lys-235 lie on the Cytoplasmic side of the membrane. Residues Ala-236–Tyr-258 form a helical membrane-spanning segment. The Extracellular segment spans residues Thr-259 to Lys-269. Residues Phe-270–Phe-289 form a helical membrane-spanning segment. Residues Arg-290–Ser-312 lie on the Cytoplasmic side of the membrane.

It belongs to the G-protein coupled receptor 1 family.

It localises to the cell membrane. Functionally, odorant receptor. The protein is Olfactory receptor 4F3/4F16/4F29 (OR4F3) of Homo sapiens (Human).